Reading from the N-terminus, the 362-residue chain is 3-isopropylmalate dehydrogenase (362 aa).

78 to 91 (GPKWESLPPDEQPE) provides a ligand contact to NAD(+). R99, R109, R138, and D227 together coordinate substrate. Residues D227, D251, and D255 each contribute to the Mg(2+) site. 285–297 (GSAPDIAGQGIAN) is a binding site for NAD(+).

The protein belongs to the isocitrate and isopropylmalate dehydrogenases family. LeuB type 1 subfamily. Homodimer. Requires Mg(2+) as cofactor. Mn(2+) serves as cofactor.

It is found in the cytoplasm. It catalyses the reaction (2R,3S)-3-isopropylmalate + NAD(+) = 4-methyl-2-oxopentanoate + CO2 + NADH. Its pathway is amino-acid biosynthesis; L-leucine biosynthesis; L-leucine from 3-methyl-2-oxobutanoate: step 3/4. Its function is as follows. Catalyzes the oxidation of 3-carboxy-2-hydroxy-4-methylpentanoate (3-isopropylmalate) to 3-carboxy-4-methyl-2-oxopentanoate. The product decarboxylates to 4-methyl-2 oxopentanoate. This chain is 3-isopropylmalate dehydrogenase, found in Geobacter sulfurreducens (strain ATCC 51573 / DSM 12127 / PCA).